Here is a 624-residue protein sequence, read N- to C-terminus: Double-stranded RNA-binding protein Staufen homolog 2 (624 aa).

5 consecutive DRBM domains span residues 55–122, 142–228, 254–321, 354–422, and 540–604; these read STSI…NGLA, QRAN…SEIS, MKSF…PEYG, RRRE…IADQ, and LTCL…EKAD. The tract at residues 197 to 223 is disordered; that stretch reads LRNEPIPERSSLNGEANRGPEEDKDAN. The span at 214–223 shows a compositional bias: basic and acidic residues; it reads RGPEEDKDAN. 2 disordered regions span residues 401 to 428 and 592 to 624; these read EKTG…TPKG and PFEQ…KAVV. Over residues 415 to 426 the composition is skewed to polar residues; sequence QNSGIADQTSTP. Residues 596 to 605 show a composition bias toward basic and acidic residues; that stretch reads AKLRGEKADN.

Functionally, RNA-binding protein required for the microtubule-dependent transport of RNAs within polarized cell types. The sequence is that of Double-stranded RNA-binding protein Staufen homolog 2 (stau2) from Xenopus tropicalis (Western clawed frog).